Reading from the N-terminus, the 878-residue chain is Phosphoenolpyruvate carboxylase (878 aa).

Catalysis depends on residues histidine 137 and lysine 545.

This sequence belongs to the PEPCase type 1 family. Mg(2+) is required as a cofactor.

The catalysed reaction is oxaloacetate + phosphate = phosphoenolpyruvate + hydrogencarbonate. Forms oxaloacetate, a four-carbon dicarboxylic acid source for the tricarboxylic acid cycle. This is Phosphoenolpyruvate carboxylase from Proteus mirabilis (strain HI4320).